A 70-amino-acid polypeptide reads, in one-letter code: Sec-independent protein translocase protein TatA (70 aa).

A helical membrane pass occupies residues 1 to 21 (MGSFSVWHWLIVLVIVLVLFG). Positions 42–70 (GMADEDQTPPPADANANAKTVDHKADEIK) are disordered. Residues 61–70 (TVDHKADEIK) show a composition bias toward basic and acidic residues.

It belongs to the TatA/E family. In terms of assembly, the Tat system comprises two distinct complexes: a TatABC complex, containing multiple copies of TatA, TatB and TatC subunits, and a separate TatA complex, containing only TatA subunits. Substrates initially bind to the TatABC complex, which probably triggers association of the separate TatA complex to form the active translocon.

The protein resides in the cell inner membrane. In terms of biological role, part of the twin-arginine translocation (Tat) system that transports large folded proteins containing a characteristic twin-arginine motif in their signal peptide across membranes. TatA could form the protein-conducting channel of the Tat system. This is Sec-independent protein translocase protein TatA from Agrobacterium fabrum (strain C58 / ATCC 33970) (Agrobacterium tumefaciens (strain C58)).